The primary structure comprises 444 residues: Phosphoglucosamine mutase (444 aa).

Residue S100 is the Phosphoserine intermediate of the active site. The Mg(2+) site is built by S100, D234, D236, and D238. S100 is modified (phosphoserine).

Belongs to the phosphohexose mutase family. Requires Mg(2+) as cofactor. Activated by phosphorylation.

The catalysed reaction is alpha-D-glucosamine 1-phosphate = D-glucosamine 6-phosphate. In terms of biological role, catalyzes the conversion of glucosamine-6-phosphate to glucosamine-1-phosphate. This Rubrobacter xylanophilus (strain DSM 9941 / JCM 11954 / NBRC 16129 / PRD-1) protein is Phosphoglucosamine mutase.